A 216-amino-acid chain; its full sequence is Imidazole glycerol phosphate synthase subunit HisH (216 aa).

The Glutamine amidotransferase type-1 domain occupies 2 to 216 (RVAIIDYGSG…LIANFLKWKP (215 aa)). The Nucleophile role is filled by C88. Active-site residues include H196 and E198.

Heterodimer of HisH and HisF.

Its subcellular location is the cytoplasm. It catalyses the reaction 5-[(5-phospho-1-deoxy-D-ribulos-1-ylimino)methylamino]-1-(5-phospho-beta-D-ribosyl)imidazole-4-carboxamide + L-glutamine = D-erythro-1-(imidazol-4-yl)glycerol 3-phosphate + 5-amino-1-(5-phospho-beta-D-ribosyl)imidazole-4-carboxamide + L-glutamate + H(+). The catalysed reaction is L-glutamine + H2O = L-glutamate + NH4(+). The protein operates within amino-acid biosynthesis; L-histidine biosynthesis; L-histidine from 5-phospho-alpha-D-ribose 1-diphosphate: step 5/9. Functionally, IGPS catalyzes the conversion of PRFAR and glutamine to IGP, AICAR and glutamate. The HisH subunit catalyzes the hydrolysis of glutamine to glutamate and ammonia as part of the synthesis of IGP and AICAR. The resulting ammonia molecule is channeled to the active site of HisF. The sequence is that of Imidazole glycerol phosphate synthase subunit HisH from Brucella abortus biovar 1 (strain 9-941).